A 257-amino-acid polypeptide reads, in one-letter code: Pyridoxine 5'-phosphate synthase (257 aa).

Asn12 is a binding site for 3-amino-2-oxopropyl phosphate. Residue 14–15 coordinates 1-deoxy-D-xylulose 5-phosphate; it reads DH. A 3-amino-2-oxopropyl phosphate-binding site is contributed by Arg23. Residue His48 is the Proton acceptor of the active site. Arg50 and His55 together coordinate 1-deoxy-D-xylulose 5-phosphate. Glu75 (proton acceptor) is an active-site residue. Thr105 is a binding site for 1-deoxy-D-xylulose 5-phosphate. His199 acts as the Proton donor in catalysis. 3-amino-2-oxopropyl phosphate-binding positions include Gly200 and 221 to 222; that span reads GH.

The protein belongs to the PNP synthase family. In terms of assembly, homooctamer; tetramer of dimers.

It is found in the cytoplasm. The enzyme catalyses 3-amino-2-oxopropyl phosphate + 1-deoxy-D-xylulose 5-phosphate = pyridoxine 5'-phosphate + phosphate + 2 H2O + H(+). Its pathway is cofactor biosynthesis; pyridoxine 5'-phosphate biosynthesis; pyridoxine 5'-phosphate from D-erythrose 4-phosphate: step 5/5. Its function is as follows. Catalyzes the complicated ring closure reaction between the two acyclic compounds 1-deoxy-D-xylulose-5-phosphate (DXP) and 3-amino-2-oxopropyl phosphate (1-amino-acetone-3-phosphate or AAP) to form pyridoxine 5'-phosphate (PNP) and inorganic phosphate. The polypeptide is Pyridoxine 5'-phosphate synthase (Xanthobacter autotrophicus (strain ATCC BAA-1158 / Py2)).